The following is a 180-amino-acid chain: Large ribosomal subunit protein uL5 (180 aa).

The protein belongs to the universal ribosomal protein uL5 family. In terms of assembly, part of the 50S ribosomal subunit; part of the 5S rRNA/L5/L18/L25 subcomplex. Contacts the 5S rRNA and the P site tRNA. Forms a bridge to the 30S subunit in the 70S ribosome.

This is one of the proteins that bind and probably mediate the attachment of the 5S RNA into the large ribosomal subunit, where it forms part of the central protuberance. In the 70S ribosome it contacts protein S13 of the 30S subunit (bridge B1b), connecting the 2 subunits; this bridge is implicated in subunit movement. Contacts the P site tRNA; the 5S rRNA and some of its associated proteins might help stabilize positioning of ribosome-bound tRNAs. The protein is Large ribosomal subunit protein uL5 of Mycoplasma mycoides subsp. mycoides SC (strain CCUG 32753 / NCTC 10114 / PG1).